The following is a 62-amino-acid chain: Sperm protamine P1 (62 aa).

Positions 1–62 are disordered; that stretch reads MARSRRHSRS…RCSRRRRRRC (62 aa).

It belongs to the protamine P1 family. Testis.

The protein localises to the nucleus. The protein resides in the chromosome. Functionally, protamines substitute for histones in the chromatin of sperm during the haploid phase of spermatogenesis. They compact sperm DNA into a highly condensed, stable and inactive complex. This chain is Sperm protamine P1 (PRM1), found in Planigale ingrami (Long-tailed planigale).